The primary structure comprises 789 residues: MEGPSGSAQGSEWPLLTVTHELRNANLTGHAEKVGIENFELLKVLGTGAYGKVFLVRKVSGHDAGKLYAMKVLKKATIVQKAKTTEHTRTERQVLEHIRQSPFLVTLHYAFQTDTKLHLILDYINGGELFTHLSQRERFSENEVQIYIGEIVLALEHLHKLGIIYRDIKLENILLDSDGHVVLTDFGLSKEFLTDENERAYSFCGTIEYMAPDIVRGGDTGHDKAVDWWSVGVLMYELLTGASPFTVDGEKNSQAEISRRILKSEPPYPQEMSALSKDIIQRLLMKDPKKRLGCGPTDADEIKQHPFFQNINWDDLAAKKVPAPFKPVIRDELDVSNFAEEFTEMDPTYSPAATPQTSEKIFQGYSFVAPSILFKRNAATVDPVQFYVGDERPGTTTIARSAMMKDSPFFQHYELDLKEKPLGEGSFSICRKCLHKKTSQEYAVKIISKRMEANTQREITALKLCEGHPNVVKLHEVYHDQLHTFLVMELLKGGELLERIQKKQHFSETEASHIMRRLVSAVSHMHDVGVVHRDLKPENLLFTDETDNSEIKIIDFGFARLKPPDNQPLKTPCFTLHYAAPELFNHNGYDESCDLWSLGVILYTMLSGQVPFQSQDKSLTCTSALEIMKKIKKGEFSFEGEAWKNVSEEAKELIQGLLTVDPNKRIKMSSLRYNEWLQDGSQLSSNPLMTPDNLGSSGAAVHTYVKATFHAFNKYKREGFCLQNVDKAPLAKRRKMKKTSTSTETRSSSSESSHSSSSHSHGKTTPTKTLQPTNPTDSNNPETIFQFSD.

The 270-residue stretch at phenylalanine 39–phenylalanine 308 folds into the Protein kinase 1 domain. ATP-binding positions include leucine 45–valine 53 and lysine 71. Aspartate 167 acts as the Proton acceptor in catalysis. Phosphoserine; by autocatalysis is present on serine 202. One can recognise an AGC-kinase C-terminal domain in the interval glutamine 309–asparagine 377. Serine 350 carries the phosphoserine modification. Serine 366 and serine 371 each carry phosphoserine; by autocatalysis. The region spanning aspartate 416–leucine 677 is the Protein kinase 2 domain. Residues leucine 422 to cysteine 430 and lysine 445 each bind ATP. Residue aspartate 534 is the Proton acceptor of the active site. Phosphothreonine is present on residues threonine 571 and threonine 690. Residues alanine 731–aspartate 789 form a disordered region. The span at threonine 739–threonine 769 shows a compositional bias: low complexity. 3 positions are modified to phosphoserine; by autocatalysis: serine 740, serine 742, and serine 748. Residues leucine 770 to aspartate 789 are compositionally biased toward polar residues.

It belongs to the protein kinase superfamily. AGC Ser/Thr protein kinase family. S6 kinase subfamily. Requires Mg(2+) as cofactor. Ser-366 and Thr-571 phosphorylation is required for kinase activity. Ser-366 and Ser-202 are autophosphorylated by the C-terminal kinase domain, and their phosphorylation is essential for the catalytic activity of the N-terminal kinase domain. Phosphorylated at Ser-350, Thr-571 and Thr-690 by MAP kinases. Autophosphorylated at Ser-740, Ser-742 and Ser-748 by the N-terminal kinase domain. In terms of tissue distribution, widely expressed with high levels in heart, brain and placenta. Less abundant in lung, kidney and liver.

The protein resides in the nucleus. It carries out the reaction L-seryl-[protein] + ATP = O-phospho-L-seryl-[protein] + ADP + H(+). The catalysed reaction is L-threonyl-[protein] + ATP = O-phospho-L-threonyl-[protein] + ADP + H(+). With respect to regulation, activated by phosphorylation at Ser-350, Thr-571 and Thr-690 by MAP kinases, and by further autophosphorylation of Ser-202, Ser-366 and Ser-371 by the activated C-terminal kinase domain. The active N-terminal kinase domain finally phosphorylates downstream substrates, as well as Ser-740, Ser-742 and Ser-748 in its own C-terminal region. In terms of biological role, serine/threonine-protein kinase that is required for the mitogen or stress-induced phosphorylation of the transcription factors CREB1 and ATF1 and that contributes to gene activation by histone phosphorylation. Phosphorylates CREB1 and ATF1 in response to mitogenic or stress stimuli such as UV-C irradiation, epidermal growth factor (EGF) and anisomycin. Directly represses transcription via phosphorylation of 'Ser-1' of histone H2A. Phosphorylates 'Ser-10' of histone H3 in response to mitogenics, stress stimuli and EGF, which results in the transcriptional activation of several immediate early genes, including proto-oncogenes c-fos/FOS and c-jun/JUN. May also phosphorylate 'Ser-28' of histone H3. Mediates the mitogen- and stress-induced phosphorylation of high mobility group protein 1 (HMGN1/HMG14). The polypeptide is Ribosomal protein S6 kinase alpha-5 (RPS6KA5) (Gallus gallus (Chicken)).